A 472-amino-acid polypeptide reads, in one-letter code: ATP synthase subunit beta (472 aa).

160 to 167 is an ATP binding site; it reads GGAGVGKT.

It belongs to the ATPase alpha/beta chains family. In terms of assembly, F-type ATPases have 2 components, CF(1) - the catalytic core - and CF(0) - the membrane proton channel. CF(1) has five subunits: alpha(3), beta(3), gamma(1), delta(1), epsilon(1). CF(0) has three main subunits: a(1), b(2) and c(9-12). The alpha and beta chains form an alternating ring which encloses part of the gamma chain. CF(1) is attached to CF(0) by a central stalk formed by the gamma and epsilon chains, while a peripheral stalk is formed by the delta and b chains.

It localises to the cell membrane. The enzyme catalyses ATP + H2O + 4 H(+)(in) = ADP + phosphate + 5 H(+)(out). In terms of biological role, produces ATP from ADP in the presence of a proton gradient across the membrane. The catalytic sites are hosted primarily by the beta subunits. In Lachnoclostridium phytofermentans (strain ATCC 700394 / DSM 18823 / ISDg) (Clostridium phytofermentans), this protein is ATP synthase subunit beta.